A 374-amino-acid polypeptide reads, in one-letter code: MAGTDREKALDAALAQIERQFGKGAVMRMGDRTNEPIEVIPTGSTALDVALGVGGIPRGRVVEVYGPESSGKTTLTLHAVANAQKAGGQVAFVDAEHALDPEYAKKLGVDIDNLILSQPDNGEQALEIVDMLVRSGALDLIVIDSVAALVPRAEIEGEMGDSHVGLQARLMSQALRKITSALNQSKTTAIFINQLREKIGVMFGSPETTTGGRALKFYASVRLDIRRIETLKDGTDAVGNRTRVKVVKNKVAPPFKQAEFDILYGQGISREGGLIDMGVENGFVRKAGAWYTYEGDQLGQGKENARNFLKDNPDLANEIEKKIKQKLGVGVHPEESATEPGADAASAAPADAAPAVPAPTTAKATKSKAAAAKS.

Residue 66–73 coordinates ATP; it reads GPESSGKT. Residues 327-374 form a disordered region; it reads LGVGVHPEESATEPGADAASAAPADAAPAVPAPTTAKATKSKAAAAKS. The segment covering 338-374 has biased composition (low complexity); sequence TEPGADAASAAPADAAPAVPAPTTAKATKSKAAAAKS.

This sequence belongs to the RecA family.

It localises to the cytoplasm. Its function is as follows. Can catalyze the hydrolysis of ATP in the presence of single-stranded DNA, the ATP-dependent uptake of single-stranded DNA by duplex DNA, and the ATP-dependent hybridization of homologous single-stranded DNAs. It interacts with LexA causing its activation and leading to its autocatalytic cleavage. The sequence is that of Protein RecA from Streptomyces lividans.